Consider the following 450-residue polypeptide: Phosphoglucosamine mutase 2 (450 aa).

Catalysis depends on serine 101, which acts as the Phosphoserine intermediate. The Mg(2+) site is built by serine 101, aspartate 245, aspartate 247, and aspartate 249. Serine 101 carries the phosphoserine modification.

This sequence belongs to the phosphohexose mutase family. It depends on Mg(2+) as a cofactor. In terms of processing, activated by phosphorylation.

It catalyses the reaction alpha-D-glucosamine 1-phosphate = D-glucosamine 6-phosphate. In terms of biological role, catalyzes the conversion of glucosamine-6-phosphate to glucosamine-1-phosphate. This chain is Phosphoglucosamine mutase 2, found in Shewanella sp. (strain MR-7).